Here is a 204-residue protein sequence, read N- to C-terminus: Large ribosomal subunit protein eL15A (204 aa).

The segment at 164–185 (LTATGKKSRGINKGHKFNNTKA) is disordered. Positions 169-185 (KKSRGINKGHKFNNTKA) are enriched in basic residues.

This sequence belongs to the eukaryotic ribosomal protein eL15 family. Component of the large ribosomal subunit (LSU). Mature yeast ribosomes consist of a small (40S) and a large (60S) subunit. The 40S small subunit contains 1 molecule of ribosomal RNA (18S rRNA) and 33 different proteins (encoded by 57 genes). The large 60S subunit contains 3 rRNA molecules (25S, 5.8S and 5S rRNA) and 46 different proteins (encoded by 81 genes).

The protein resides in the cytoplasm. Functionally, component of the ribosome, a large ribonucleoprotein complex responsible for the synthesis of proteins in the cell. The small ribosomal subunit (SSU) binds messenger RNAs (mRNAs) and translates the encoded message by selecting cognate aminoacyl-transfer RNA (tRNA) molecules. The large subunit (LSU) contains the ribosomal catalytic site termed the peptidyl transferase center (PTC), which catalyzes the formation of peptide bonds, thereby polymerizing the amino acids delivered by tRNAs into a polypeptide chain. The nascent polypeptides leave the ribosome through a tunnel in the LSU and interact with protein factors that function in enzymatic processing, targeting, and the membrane insertion of nascent chains at the exit of the ribosomal tunnel. The protein is Large ribosomal subunit protein eL15A of Saccharomyces cerevisiae (strain ATCC 204508 / S288c) (Baker's yeast).